Here is a 115-residue protein sequence, read N- to C-terminus: Macrophage migration inhibitory factor (115 aa).

Proline 2 functions as the Proton acceptor; via imino nitrogen in the catalytic mechanism. Positions 33 and 65 each coordinate substrate. Lysine 78 is subject to N6-acetyllysine; alternate. Residue lysine 78 is modified to N6-succinyllysine; alternate. Position 98 (asparagine 98) interacts with substrate.

The protein belongs to the MIF family. As to quaternary structure, homotrimer. Interacts with CD74 and CXCR2 extracellular domain and COPS5. Interacts with the USO1 and BNIPL.

It is found in the secreted. The protein localises to the cytoplasm. The enzyme catalyses 3-phenylpyruvate = enol-phenylpyruvate. It carries out the reaction L-dopachrome = 5,6-dihydroxyindole-2-carboxylate. Its function is as follows. Pro-inflammatory cytokine involved in the innate immune response to bacterial pathogens. The expression of MIF at sites of inflammation suggests a role as mediator in regulating the function of macrophages in host defense. Counteracts the anti-inflammatory activity of glucocorticoids. Has phenylpyruvate tautomerase and dopachrome tautomerase activity (in vitro), but the physiological substrate is not known. It is not clear whether the tautomerase activity has any physiological relevance, and whether it is important for cytokine activity. The chain is Macrophage migration inhibitory factor from Mus musculus (Mouse).